A 138-amino-acid chain; its full sequence is Ergosterol biosynthetic protein 28 (138 aa).

A helical transmembrane segment spans residues 17–33; that stretch reads LPYWLLFISVVSIFNSV. Asn40 carries N-linked (GlcNAc...) asparagine glycosylation. A run of 3 helical transmembrane segments spans residues 56–75, 87–107, and 114–131; these read LSARTFGTWTLITSIVRFYG, LTQFTFAIAAWHFLSEWLYFG, and GLSGPLIVSSVSLVWMYL.

This sequence belongs to the ERG28 family. In terms of assembly, heterotetramer of ERG25, ERG26, ERG27 and ERG28. ERG28 acts as a scaffold to tether ERG27 and other 4,4-demethylation-related enzymes, forming a demethylation enzyme complex, in the endoplasmic reticulum. Interacts with ERG25, ERG26 and ERG27. Also interacts with ERG1, ERG3, ERG5, ERG6 and ERG11.

The protein localises to the endoplasmic reticulum membrane. Part of the third module of ergosterol biosynthesis pathway that includes the late steps of the pathway. ERG28 has a role as a scaffold to help anchor the catalytic components of the C-4 demethylation complex ERG25, ERG26 and ERG27 to the endoplasmic reticulum. The third module or late pathway involves the ergosterol synthesis itself through consecutive reactions that mainly occur in the endoplasmic reticulum (ER) membrane. Firstly, the squalene synthase ERG9 catalyzes the condensation of 2 farnesyl pyrophosphate moieties to form squalene, which is the precursor of all steroids. Squalene synthase is crucial for balancing the incorporation of farnesyl diphosphate (FPP) into sterol and nonsterol isoprene synthesis. Secondly, the squalene epoxidase ERG1 catalyzes the stereospecific oxidation of squalene to (S)-2,3-epoxysqualene, which is considered to be a rate-limiting enzyme in steroid biosynthesis. Then, the lanosterol synthase ERG7 catalyzes the cyclization of (S)-2,3 oxidosqualene to lanosterol, a reaction that forms the sterol core. In the next steps, lanosterol is transformed to zymosterol through a complex process involving various demethylation, reduction and desaturation reactions. The lanosterol 14-alpha-demethylase ERG11 (also known as CYP51) catalyzes C14-demethylation of lanosterol to produce 4,4'-dimethyl cholesta-8,14,24-triene-3-beta-ol, which is critical for ergosterol biosynthesis. The C-14 reductase ERG24 reduces the C14=C15 double bond of 4,4-dimethyl-cholesta-8,14,24-trienol to produce 4,4-dimethyl-cholesta-8,24-dienol. 4,4-dimethyl-cholesta-8,24-dienol is substrate of the C-4 demethylation complex ERG25-ERG26-ERG27 in which ERG25 catalyzes the three-step monooxygenation required for the demethylation of 4,4-dimethyl and 4alpha-methylsterols, ERG26 catalyzes the oxidative decarboxylation that results in a reduction of the 3-beta-hydroxy group at the C-3 carbon to an oxo group, and ERG27 is responsible for the reduction of the keto group on the C-3. ERG28 has a role as a scaffold to help anchor ERG25, ERG26 and ERG27 to the endoplasmic reticulum and ERG29 regulates the activity of the iron-containing C4-methylsterol oxidase ERG25. Then, the sterol 24-C-methyltransferase ERG6 catalyzes the methyl transfer from S-adenosyl-methionine to the C-24 of zymosterol to form fecosterol. The C-8 sterol isomerase ERG2 catalyzes the reaction which results in unsaturation at C-7 in the B ring of sterols and thus converts fecosterol to episterol. The sterol-C5-desaturase ERG3 then catalyzes the introduction of a C-5 double bond in the B ring to produce 5-dehydroepisterol. The C-22 sterol desaturase ERG5 further converts 5-dehydroepisterol into ergosta-5,7,22,24(28)-tetraen-3beta-ol by forming the C-22(23) double bond in the sterol side chain. Finally, ergosta-5,7,22,24(28)-tetraen-3beta-ol is substrate of the C-24(28) sterol reductase ERG4 to produce ergosterol. The polypeptide is Ergosterol biosynthetic protein 28 (Candida albicans (strain SC5314 / ATCC MYA-2876) (Yeast)).